Here is an 806-residue protein sequence, read N- to C-terminus: Polyribonucleotide nucleotidyltransferase (806 aa).

Residues D488 and D494 each coordinate Mg(2+). Residues 555–614 (PQIRTVQIPTDKIRDLIGPGGKTIRGIIEATQVKIDVDDTGRVNIASSDEEGLKKALAMI) form the KH domain. Residues 624-691 (GKTYLGKVVR…EGNRIKLSRK (68 aa)) form the S1 motif domain. Residues 698 to 806 (RQKLGLPEPG…QGGGGNRGPQ (109 aa)) form a disordered region. Residues 704-717 (PEPGAEAPAAAEGQ) are compositionally biased toward low complexity. Over residues 738 to 757 (GGEDFDDFDEEGGEGEGEDE) the composition is skewed to acidic residues. A compositionally biased stretch (basic and acidic residues) spans 758 to 774 (NFNREDTPNSAPGERRP). The span at 783–792 (RGRRRRRGRG) shows a compositional bias: basic residues. The segment covering 793–806 (RGPGQGGGGNRGPQ) has biased composition (gly residues).

Belongs to the polyribonucleotide nucleotidyltransferase family. The cofactor is Mg(2+).

The protein localises to the cytoplasm. The enzyme catalyses RNA(n+1) + phosphate = RNA(n) + a ribonucleoside 5'-diphosphate. Involved in mRNA degradation. Catalyzes the phosphorolysis of single-stranded polyribonucleotides processively in the 3'- to 5'-direction. The protein is Polyribonucleotide nucleotidyltransferase of Acidobacterium capsulatum (strain ATCC 51196 / DSM 11244 / BCRC 80197 / JCM 7670 / NBRC 15755 / NCIMB 13165 / 161).